Consider the following 396-residue polypeptide: S-adenosylmethionine synthase (396 aa).

Residue H16 coordinates ATP. D18 lines the Mg(2+) pocket. E44 contributes to the K(+) binding site. Positions 57 and 100 each coordinate L-methionine. A flexible loop region spans residues 100-110 (QSVDIAQGVDR). ATP is bound by residues 165–167 (DAK), D240, 246–247 (RK), A263, and K267. D240 is an L-methionine binding site. Residue K271 participates in L-methionine binding.

The protein belongs to the AdoMet synthase family. Homotetramer; dimer of dimers. Requires Mg(2+) as cofactor. The cofactor is K(+).

It is found in the cytoplasm. It carries out the reaction L-methionine + ATP + H2O = S-adenosyl-L-methionine + phosphate + diphosphate. The protein operates within amino-acid biosynthesis; S-adenosyl-L-methionine biosynthesis; S-adenosyl-L-methionine from L-methionine: step 1/1. In terms of biological role, catalyzes the formation of S-adenosylmethionine (AdoMet) from methionine and ATP. The overall synthetic reaction is composed of two sequential steps, AdoMet formation and the subsequent tripolyphosphate hydrolysis which occurs prior to release of AdoMet from the enzyme. The protein is S-adenosylmethionine synthase of Pseudomonas putida (strain W619).